We begin with the raw amino-acid sequence, 599 residues long: Potassium-transporting ATPase potassium-binding subunit (599 aa).

Transmembrane regions (helical) follow at residues 8 to 28, 61 to 81, 133 to 153, 176 to 196, 280 to 300, 311 to 331, 366 to 386, 391 to 411, 416 to 436, 456 to 476, 521 to 541, and 563 to 583; these read LLAL…IWLA, WQYA…VYAL, ALAV…FALF, AWLL…NGVI, LTNF…CFAF, WAVL…ITPA, INAS…AVIA, FTPL…VVFG, GLYG…LMIG, IAIL…VLAG, LLGL…LAIA, and LFVL…YVPA.

It belongs to the KdpA family. In terms of assembly, the system is composed of three essential subunits: KdpA, KdpB and KdpC.

Its subcellular location is the cell inner membrane. Functionally, part of the high-affinity ATP-driven potassium transport (or Kdp) system, which catalyzes the hydrolysis of ATP coupled with the electrogenic transport of potassium into the cytoplasm. This subunit binds the periplasmic potassium ions and delivers the ions to the membrane domain of KdpB through an intramembrane tunnel. The chain is Potassium-transporting ATPase potassium-binding subunit from Polaromonas naphthalenivorans (strain CJ2).